A 310-amino-acid chain; its full sequence is Pantothenate kinase (310 aa).

Glycine 95–serine 102 provides a ligand contact to ATP.

This sequence belongs to the prokaryotic pantothenate kinase family.

It is found in the cytoplasm. It carries out the reaction (R)-pantothenate + ATP = (R)-4'-phosphopantothenate + ADP + H(+). The protein operates within cofactor biosynthesis; coenzyme A biosynthesis; CoA from (R)-pantothenate: step 1/5. The sequence is that of Pantothenate kinase from Rhodococcus jostii (strain RHA1).